The sequence spans 573 residues: Ribosomal RNA-processing protein 9 (573 aa).

The interval 1–63 (MSDVTQQKKR…FEGENPADKR (63 aa)) is disordered. Position 2 is an N-acetylserine (S2). A compositionally biased stretch (acidic residues) spans 25–58 (DEEITDPSSNEDEQLEVSDEEDALESEEEFEGEN). A coiled-coil region spans residues 32–106 (SSNEDEQLEV…KERTIDEYNN (75 aa)). Residue S50 is modified to Phosphoserine. WD repeat units follow at residues 234-273 (GHYD…PVKV), 278-317 (DRRG…QLEI), 320-359 (GHHD…RLTF), 397-435 (FCEG…PIFT), 471-509 (QPFW…RSFE), and 516-562 (GAKG…ARNG).

It belongs to the WD repeat RRP9 family. In terms of assembly, interacts with UTP25. Component of the ribosomal small subunit (SSU) processome composed of at least 40 protein subunits and snoRNA U3.

It localises to the nucleus. The protein localises to the nucleolus. Its function is as follows. Involved in nucleolar processing of pre-18S ribosomal RNA. Required for efficient pre-rRNA cleavage at sites A0, A1 and A2, and biosynthesis of 18S rRNA. This chain is Ribosomal RNA-processing protein 9 (RRP9), found in Saccharomyces cerevisiae (strain ATCC 204508 / S288c) (Baker's yeast).